Here is a 1624-residue protein sequence, read N- to C-terminus: MSKRRMSVGQQTWALLCKNCLKKWRMKRQTLLEWLFSFLLVLFLYLFFSNLHQVHDTPQMSSMDLGRVDSFNDTNYVIAFAPESKTTQEIMNKVASAPFLKGRTIMGWPDEKSMDELDLNYSIDAVRVIFTDTFSYHLKFSWGHRIPMMKEHRDHSAHCQAVNEKMKCEGSEFWEKGFVAFQAAINAAIIEIATNHSVMEQLMSVTGVHMKILPFVAQGGVATDFFIFFCIISFSTFIYYVSVNVTQERQYITSLMTMMGLRESAFWLSWGLMYAGFILIMATLMALIVKSAQIVVLTGFVMVFTLFLLYGLSLITLAFLMSVLIKKPFLTGLVVFLLIVFWGILGFPALYTRLPAFLEWTLCLLSPFAFTVGMAQLIHLDYDVNSNAHLDSSQNPYLIIATLFMLVFDTLLYLVLTLYFDKILPAEYGHRCSPLFFLKSCFWFQHGRANHVVLENETDSDPTPNDCFEPVSPEFCGKEAIRIKNLKKEYAGKCERVEALKGVVFDIYEGQITALLGHSGAGKTTLLNILSGLSVPTSGSVTVYNHTLSRMADIENISKFTGFCPQSNVQFGFLTVKENLRLFAKIKGILPHEVEKEVQRVVQELEMENIQDILAQNLSGGQNRKLTFGIAILGDPQVLLLDEPTAGLDPLSRHRIWNLLKEGKSDRVILFSTQFIDEADILADRKVFISNGKLKCAGSSLFLKKKWGIGYHLSLHLNERCDPESITSLVKQHISDAKLTAQSEEKLVYILPLERTNKFPELYRDLDRCSNQGIEDYGVSITTLNEVFLKLEGKSTIDESDIGIWGQLQTDGAKDIGSLVELEQVLSSFHETRKTISGVALWRQQVCAIAKVRFLKLKKERKSLWTILLLFGISFIPQLLEHLFYESYQKSYPWELSPNTYFLSPGQQPQDPLTHLLVINKTGSTIDNFLHSLRRQNIAIEVDAFGTRNGTDDPSYNGAIIVSGDEKDHRFSIACNTKRLNCFPVLLDVISNGLLGIFNSSEHIQTDRSTFFEEHMDYEYGYRSNTFFWIPMAASFTPYIAMSSIGDYKKKAHSQLRISGLYPSAYWFGQALVDVSLYFLILLLMQIMDYIFSPEEIIFIIQNLLIQILCSIGYVSSLVFLTYVISFIFRNGRKNSGIWSFFFLIVVIFSIVATDLNEYGFLGLFFGTMLIPPFTLIGSLFIFSEISPDSMDYLGASESEIVYLALLIPYLHFLIFLFILRCLEMNCRKKLMRKDPVFRISPRSNAIFPNPEEPEGEEEDIQMERMRTVNAMAVRDFDETPVIIASCLRKEYAGKKKNCFSKRKKKIATRNVSFCVKKGEVIGLLGHNGAGKSTTIKMITGDTKPTAGQVILKGSGGGEPLGFLGYCPQENALWPNLTVRQHLEVYAAVKGLRKGDAMIAITRLVDALKLQDQLKAPVKTLSEGIKRKLCFVLSILGNPSVVLLDEPSTGMDPEGQQQMWQVIRATFRNTERGALLTTHYMAEAEAVCDRVAIMVSGRLRCIGSIQHLKSKFGKDYLLEMKLKNLAQMEPLHAEILRLFPQAAQQERFSSLMVYKLPVEDVRPLSQAFFKLEIVKQSFDLEEYSLSQSTLEQVFLELSKEQELGDLEEDFDPSVKWKLLLQEEP.

The helical transmembrane segment at 31 to 51 (LLEWLFSFLLVLFLYLFFSNL) threads the bilayer. N120 and N195 each carry an N-linked (GlcNAc...) asparagine glycan. 6 helical membrane-spanning segments follow: residues 221-243 (VATD…YVSV), 269-289 (SWGL…ALIV), 300-320 (FVMV…LAFL), 329-349 (FLTG…GFPA), 354-374 (LPAF…TVGM), and 398-418 (LIIA…VLTL). Residues 481–716 (IRIKNLKKEY…WGIGYHLSLH (236 aa)) enclose the ABC transporter 1 domain. Residue 517–524 (GHSGAGKT) coordinates ATP. A helical transmembrane segment spans residues 864-884 (LWTILLLFGISFIPQLLEHLF). N-linked (GlcNAc...) asparagine glycosylation is present at N949. 6 helical membrane-spanning segments follow: residues 1026-1046 (TFFW…SSIG), 1065-1085 (AYWF…LLLM), 1108-1128 (ILCS…ISFI), 1136-1156 (SGIW…ATDL), 1163-1183 (GLFF…LFIF), and 1200-1220 (EIVY…LFIL). The ABC transporter 2 domain occupies 1288–1521 (LRKEYAGKKK…FGKDYLLEMK (234 aa)). 1326–1333 (GHNGAGKS) is an ATP binding site.

The protein belongs to the ABC transporter superfamily. ABCA family. In terms of tissue distribution, widely expressed with higher expression in heart.

The protein localises to the membrane. Transporter that may play a role in monocyte differentiation and lipid transport and homeostasis. The sequence is that of ATP-binding cassette sub-family A member 9 (ABCA9) from Homo sapiens (Human).